A 436-amino-acid chain; its full sequence is MMATQTLSIDSYPDGQQMQVVTELKTEQDPNCSEPDVEGVSPPPVGSQTPMDADKQAIYRHPLFPLLALLFEKCEQSTQGSEGTTSASFDVDIENFVRKQEKEGKPFFCEDPETDNLMVKAIQVLRIHLLELEKVNELCKDFCSRYIACLKTKMNSETLLSGEPGSPYSPVQSQQIQSAITGTLSPQGIVVPASALQQGNVTMATVAGGTVYQPVTVVTPQGQVVTQALSPGTIRIQNSQLQLQLNQDLSILHQDDGSSKNKRGVLPKHATNVMRSWLFQHIGHPYPTEDEKKQIAAQTNLTLLQVNNWFINARRRILQPMLDSSCSETPKTKKKTAQNRPVQRFWPDSIASGAAQPAASELTVSEGAVVTITAPVSMNVDSLQSLSSDGATLAVQQVMMAEQSEDDSVDSTGDGGAALAPGHLGGLVLENSDSLQ.

Residues 24–49 are disordered; the sequence is LKTEQDPNCSEPDVEGVSPPPVGSQT. Residues Ser33 and Ser41 each carry the phosphoserine modification. Residues 80–163 enclose the MEIS N-terminal domain; that stretch reads GSEGTTSASF…MNSETLLSGE (84 aa). The homeobox; TALE-type DNA-binding region spans 259 to 321; it reads SKNKRGVLPK…NARRRILQPM (63 aa). The tract at residues 401-436 is disordered; sequence AEQSEDDSVDSTGDGGAALAPGHLGGLVLENSDSLQ.

The protein belongs to the TALE/MEIS homeobox family. In terms of assembly, interacts with MN1.

It is found in the nucleus. Its function is as follows. Activates transcription in the presence of PBX1A and HOXA1. This chain is Homeobox protein PKNOX1, found in Bos taurus (Bovine).